We begin with the raw amino-acid sequence, 263 residues long: Proteasome subunit alpha type-1 (263 aa).

M1 carries the N-acetylmethionine modification. Position 110 is a phosphoserine; alternate (S110). S110 is a glycosylation site (O-linked (GlcNAc) serine; alternate). Residue K115 forms a Glycyl lysine isopeptide (Lys-Gly) (interchain with G-Cter in ubiquitin) linkage. S177 is modified (phosphoserine). K208 participates in a covalent cross-link: Glycyl lysine isopeptide (Lys-Gly) (interchain with G-Cter in ubiquitin). Residues 232 to 263 form a disordered region; the sequence is FLDGLEERPQRKAQPSQAAEEPAEKADEPMEH. The segment covering 253 to 263 has biased composition (basic and acidic residues); sequence PAEKADEPMEH.

This sequence belongs to the peptidase T1A family. The 26S proteasome consists of a 20S proteasome core and two 19S regulatory subunits. The 20S proteasome core is a barrel-shaped complex made of 28 subunits that are arranged in four stacked rings. The two outer rings are each formed by seven alpha subunits, and the two inner rings are formed by seven beta subunits. The proteolytic activity is exerted by three beta-subunits PSMB5, PSMB6 and PSMB7. Interacts with NOTCH3. Interacts with ZFAND1. In terms of processing, C-terminal extension is partially cleaved off by limited proteolysis leading to a conversion of the proteasome from its latent into its active form. In terms of tissue distribution, detected in liver (at protein level).

Its subcellular location is the cytoplasm. The protein localises to the nucleus. Its function is as follows. Component of the 20S core proteasome complex involved in the proteolytic degradation of most intracellular proteins. This complex plays numerous essential roles within the cell by associating with different regulatory particles. Associated with two 19S regulatory particles, forms the 26S proteasome and thus participates in the ATP-dependent degradation of ubiquitinated proteins. The 26S proteasome plays a key role in the maintenance of protein homeostasis by removing misfolded or damaged proteins that could impair cellular functions, and by removing proteins whose functions are no longer required. Associated with the PA200 or PA28, the 20S proteasome mediates ubiquitin-independent protein degradation. This type of proteolysis is required in several pathways including spermatogenesis (20S-PA200 complex) or generation of a subset of MHC class I-presented antigenic peptides (20S-PA28 complex). This chain is Proteasome subunit alpha type-1 (Psma1), found in Mus musculus (Mouse).